A 633-amino-acid polypeptide reads, in one-letter code: DNA-directed RNA polymerase subunit gamma (633 aa).

Residues C74, C76, C89, and C92 each contribute to the Zn(2+) site. Mg(2+) contacts are provided by D471, D473, and D475.

Belongs to the RNA polymerase beta' chain family. RpoC1 subfamily. As to quaternary structure, in cyanobacteria the RNAP catalytic core is composed of 2 alpha, 1 beta, 1 beta', 1 gamma and 1 omega subunit. When a sigma factor is associated with the core the holoenzyme is formed, which can initiate transcription. Mg(2+) serves as cofactor. The cofactor is Zn(2+).

It carries out the reaction RNA(n) + a ribonucleoside 5'-triphosphate = RNA(n+1) + diphosphate. Functionally, DNA-dependent RNA polymerase catalyzes the transcription of DNA into RNA using the four ribonucleoside triphosphates as substrates. The protein is DNA-directed RNA polymerase subunit gamma of Prochlorococcus marinus (strain MIT 9211).